The chain runs to 71 residues: Small ribosomal subunit protein bS21 (71 aa).

The segment at 38 to 71 (YEKPTTERKRARASAIKRHAKKLARENARRTRLY) is disordered. Positions 46–59 (KRARASAIKRHAKK) are enriched in basic residues. Basic and acidic residues predominate over residues 60–71 (LARENARRTRLY).

This sequence belongs to the bacterial ribosomal protein bS21 family.

In Hamiltonella defensa subsp. Acyrthosiphon pisum (strain 5AT), this protein is Small ribosomal subunit protein bS21.